Here is a 971-residue protein sequence, read N- to C-terminus: Translation initiation factor IF-2 (971 aa).

Basic and acidic residues predominate over residues 48 to 63 (DHLRKSHGATDGDKRK). Disordered regions lie at residues 48–86 (DHLR…ARTI) and 100–381 (DDVA…STFQ). Over residues 105-114 (GADQGQAQVA) the composition is skewed to low complexity. The span at 121–181 (ELKRREEEAR…EEEAATKRAA (61 aa)) shows a compositional bias: basic and acidic residues. The segment covering 182 to 202 (AEVAAAQQQAAAQQAAAEQEA) has biased composition (low complexity). Positions 210–261 (DEARAAAERAAQREAAKKAEDAAREAADKARAEQEEISKRRAAAEAEARAIR) are enriched in basic and acidic residues. Residues 277 to 286 (PPKPVEPPKP) show a composition bias toward pro residues. The segment covering 304 to 326 (ARPAVKKPAGAAAPATTQAPAGA) has biased composition (low complexity). Residues 356-369 (SSGGVDRGWRGGPK) show a composition bias toward gly residues. A tr-type G domain is found at 471 to 640 (PRPPVVTVMG…LLQAEVLELK (170 aa)). Residues 480 to 487 (GHVDHGKT) form a G1 region. 480–487 (GHVDHGKT) provides a ligand contact to GTP. The interval 505-509 (GITQH) is G2. Positions 526–529 (DTPG) are G3. GTP contacts are provided by residues 526–530 (DTPGH) and 580–583 (NKID). Residues 580–583 (NKID) form a G4 region. The interval 616–618 (SAK) is G5.

The protein belongs to the TRAFAC class translation factor GTPase superfamily. Classic translation factor GTPase family. IF-2 subfamily.

The protein localises to the cytoplasm. Its function is as follows. One of the essential components for the initiation of protein synthesis. Protects formylmethionyl-tRNA from spontaneous hydrolysis and promotes its binding to the 30S ribosomal subunits. Also involved in the hydrolysis of GTP during the formation of the 70S ribosomal complex. This is Translation initiation factor IF-2 from Burkholderia orbicola (strain AU 1054).